The chain runs to 404 residues: MRFLGDYKFALLTCSVIALSIYFAINVEFRFAYDSPGTRTGVKVSEKSPFDDEFMYMSIAEDIDRSYLHYDYYRESCPTAEKIIAKAIRDIYNVTPSVAPPIIRLLFHDCFIEGCDASVLLDADEAHTSEKDASPNLSLKGFDVIDAVKSELENVCPGVVSCADLLVLAAREAVLVAGGPFYPLETGRKDSAAAYRDFAEHELPAPDATLSVILQRFSFRGFNERETVSLFGAHSIGITHCTFFKNRLYNFSATGKPDPELNPGFLQELKTKCPFSVSTSSPSAPPDIGLPPSLPASDSENSYGMSSGNRNDEVIDLSYNNEGGDENFGTRYFRRLMQNKGLMSSDQQLMGSEVTEMWVRAYASDPLLFRREFAMSMMKLSSYNVLTGPLGQVRTSCSKALPRN.

The signal sequence occupies residues 1 to 18 (MRFLGDYKFALLTCSVIA). Disulfide bonds link cysteine 77/cysteine 156, cysteine 110/cysteine 115, cysteine 162/cysteine 397, and cysteine 241/cysteine 273. The active-site Proton acceptor is the histidine 108. Residues aspartate 109, isoleucine 112, glycine 114, aspartate 116, and serine 118 each contribute to the Ca(2+) site. N-linked (GlcNAc...) asparagine glycosylation occurs at asparagine 136. Proline 204 contacts substrate. Position 234 (histidine 234) interacts with heme b. Serine 235 lines the Ca(2+) pocket. Residue asparagine 250 is glycosylated (N-linked (GlcNAc...) asparagine). Residues 276–307 (SVSTSSPSAPPDIGLPPSLPASDSENSYGMSS) form a disordered region. Residues 283–294 (SAPPDIGLPPSL) are compositionally biased toward pro residues. Aspartate 287 serves as a coordination point for Ca(2+). The segment covering 296 to 307 (ASDSENSYGMSS) has biased composition (polar residues).

This sequence belongs to the peroxidase family. Classical plant (class III) peroxidase subfamily. Heme b serves as cofactor. Requires Ca(2+) as cofactor.

It localises to the secreted. It catalyses the reaction 2 a phenolic donor + H2O2 = 2 a phenolic radical donor + 2 H2O. Functionally, removal of H(2)O(2), oxidation of toxic reductants, biosynthesis and degradation of lignin, suberization, auxin catabolism, response to environmental stresses such as wounding, pathogen attack and oxidative stress. These functions might be dependent on each isozyme/isoform in each plant tissue. This is Putative Peroxidase 48 (PER48) from Arabidopsis thaliana (Mouse-ear cress).